A 338-amino-acid chain; its full sequence is Galactinol synthase 2 (338 aa).

Lys-105 is a catalytic residue. Residues Asp-121, Asp-123, and His-258 each coordinate Mn(2+).

This sequence belongs to the glycosyltransferase 8 family. Galactosyltransferase subfamily. A divalent metal cation serves as cofactor.

It is found in the cytoplasm. It carries out the reaction myo-inositol + UDP-alpha-D-galactose = alpha-D-galactosyl-(1-&gt;3)-1D-myo-inositol + UDP + H(+). Functionally, galactinol synthase involved in the biosynthesis of raffinose family oligosaccharides (RFOs) that function as osmoprotectants. May promote plant stress tolerance. The protein is Galactinol synthase 2 (GOLS2) of Solanum lycopersicum (Tomato).